The chain runs to 853 residues: Transcription factor macR (853 aa).

The segment at residues 18–45 (CIVCRRRKVRCGREQPECANCVRMKENC) is a DNA-binding region (zn(2)-C6 fungal-type). 4 disordered regions span residues 54–122 (ESTG…PYPT), 138–166 (ANAP…PTPS), 734–775 (ASDL…AGNK), and 833–853 (LGSQ…DFPG). 3 stretches are compositionally biased toward polar residues: residues 104–116 (PQVS…SPQR), 141–163 (PQIN…SLFP), and 738–752 (RATS…SSTT).

It is found in the nucleus. Transcription factor that regulates the expression of the gene cluster that mediates the biosynthesis of macrophorins, isoprenoid epoxycyclohexenones containing cyclized drimane moieties. The protein is Transcription factor macR of Penicillium terrestre.